Reading from the N-terminus, the 565-residue chain is MSVIDHVRDMAAAGLHSNVRLLSSLLLTMSNNNPELFSPSQKYQLLVYHADSLFHDKEYRNAVSKYAMALQQKKALSKTSKVRPSTGNSASTPQSQCLPSEIEVKYKMAECYTMLKLDKDAIAVLDGIPSRQRTPKINMMLANLYKKAGQERPSVTSYKEVLRQCPLALDAILGLLSLSVKGAEVASMTMNVIQTVPNLDWLSVWIKAYAFVHTGDNSRAINTICSLEKKSLLRDNVDLLGSLADLYFRAGDSKNSVLKFEQAQMLDPYLIRGMDVYGYLLAREGRLEDVENLGCRLFNISDQHAEPWVVSGCHSFYSKRYSRALYLGAKAIQLNSNSVQALLLKGAALRNMGRVQEAIIHFREAIRLAPCRLDCYEGLIECYLASNSIREAMVMANNVYKTLGANAQTLTLLATVCLEDPVTQEKAKTLLDKALAQRPDYVKAVVKKAELLSREQKYEDGIALLRNALANQSDCVLHRILGDFLVAVNEYQEAMDQYSIALSLDPNDQKSLEGMQKMEKEESPTDATQEEDVDDMEGSGEEGDLEGSDSEAAQWADQEQWFGMQ.

10 TPR repeats span residues 101–134 (EIEV…RQRT), 169–202 (LDAI…LDWL), 203–236 (SVWI…LRDN), 237–270 (VDLL…DPYL), 339–372 (VQAL…APCR), 373–406 (LDCY…LGAN), 407–439 (AQTL…AQRP), 442–474 (VKAV…NQSD), 475–508 (CVLH…DPND), and 509–531 (QKSL…TQEE). Lysine 229 carries the post-translational modification N6-acetyllysine. Basic and acidic residues predominate over residues 513–523 (EGMQKMEKEES). A disordered region spans residues 513 to 565 (EGMQKMEKEESPTDATQEEDVDDMEGSGEEGDLEGSDSEAAQWADQEQWFGMQ). Acidic residues predominate over residues 528 to 549 (TQEEDVDDMEGSGEEGDLEGSD).

It belongs to the APC7 family. In terms of assembly, V-shaped homodimer. The mammalian APC/C is composed at least of 14 distinct subunits ANAPC1, ANAPC2, CDC27/APC3, ANAPC4, ANAPC5, CDC16/APC6, ANAPC7, CDC23/APC8, ANAPC10, ANAPC11, CDC26/APC12, ANAPC13, ANAPC15 and ANAPC16 that assemble into a complex of at least 19 chains with a combined molecular mass of around 1.2 MDa; APC/C interacts with FZR1 and FBXO5.

It is found in the cytoplasm. It localises to the cytoskeleton. Its subcellular location is the nucleus. The protein resides in the spindle. It functions in the pathway protein modification; protein ubiquitination. Functionally, component of the anaphase promoting complex/cyclosome (APC/C), a cell cycle-regulated E3 ubiquitin ligase that controls progression through mitosis and the G1 phase of the cell cycle. The APC/C complex acts by mediating ubiquitination and subsequent degradation of target proteins: it mainly mediates the formation of 'Lys-11'-linked polyubiquitin chains and, to a lower extent, the formation of 'Lys-48'- and 'Lys-63'-linked polyubiquitin chains. The APC/C complex catalyzes assembly of branched 'Lys-11'-/'Lys-48'-linked branched ubiquitin chains on target proteins. APC7 is not required for the assembly of the APC/C complex, but has an enzyme-substrate adapter activity mediating the processive ubiquitination of specific substrates. Involved in brain development through the specific ubiquitination and clearance of MKI67 from constitutive heterochromatin after neuronal progenitors exit mitosis. The chain is Anaphase-promoting complex subunit 7 (Anapc7) from Mus musculus (Mouse).